The chain runs to 570 residues: Sulfite reductase [NADPH] hemoprotein beta-component (570 aa).

Residues Cys-434, Cys-440, Cys-479, and Cys-483 each contribute to the [4Fe-4S] cluster site. Cys-483 contacts siroheme.

Belongs to the nitrite and sulfite reductase 4Fe-4S domain family. As to quaternary structure, alpha(8)-beta(8). The alpha component is a flavoprotein, the beta component is a hemoprotein. Requires siroheme as cofactor. The cofactor is [4Fe-4S] cluster.

The catalysed reaction is hydrogen sulfide + 3 NADP(+) + 3 H2O = sulfite + 3 NADPH + 4 H(+). Its pathway is sulfur metabolism; hydrogen sulfide biosynthesis; hydrogen sulfide from sulfite (NADPH route): step 1/1. In terms of biological role, component of the sulfite reductase complex that catalyzes the 6-electron reduction of sulfite to sulfide. This is one of several activities required for the biosynthesis of L-cysteine from sulfate. The protein is Sulfite reductase [NADPH] hemoprotein beta-component of Escherichia coli (strain B / BL21-DE3).